The following is a 491-amino-acid chain: Beta-galactosidase (491 aa).

Glu209 (proton donor) is an active-site residue. Glu389 functions as the Nucleophile in the catalytic mechanism.

The protein belongs to the glycosyl hydrolase 1 family.

The enzyme catalyses Hydrolysis of terminal non-reducing beta-D-galactose residues in beta-D-galactosides.. This Sulfolobus acidocaldarius (strain ATCC 33909 / DSM 639 / JCM 8929 / NBRC 15157 / NCIMB 11770) protein is Beta-galactosidase (bgaS).